The following is a 238-amino-acid chain: Opacity protein opA66 (238 aa).

Residue Ala1 is a signal peptide. Disordered stretches follow at residues 88 to 109 and 162 to 183; these read NLQR…QENG and GARG…AHQE. Residues 168–183 show a composition bias toward polar residues; it reads PTVSSPYKNTQDAHQE.

This sequence belongs to the opacity porin family.

Its subcellular location is the cell outer membrane. Implicated in a number of adherence functions. OPA proteins are implicated in pathogenesis and are subject to phase variation. This chain is Opacity protein opA66, found in Neisseria gonorrhoeae.